The sequence spans 434 residues: Histidinol dehydrogenase (434 aa).

Positions 130, 188, and 211 each coordinate NAD(+). S237, Q259, and H262 together coordinate substrate. Residues Q259 and H262 each coordinate Zn(2+). Catalysis depends on proton acceptor residues E326 and H327. Substrate is bound by residues H327, D360, E414, and H419. D360 contributes to the Zn(2+) binding site. H419 contributes to the Zn(2+) binding site.

This sequence belongs to the histidinol dehydrogenase family. In terms of assembly, homodimer. The cofactor is Zn(2+).

It carries out the reaction L-histidinol + 2 NAD(+) + H2O = L-histidine + 2 NADH + 3 H(+). It functions in the pathway amino-acid biosynthesis; L-histidine biosynthesis; L-histidine from 5-phospho-alpha-D-ribose 1-diphosphate: step 9/9. Catalyzes the sequential NAD-dependent oxidations of L-histidinol to L-histidinaldehyde and then to L-histidine. The chain is Histidinol dehydrogenase from Escherichia coli O157:H7.